A 548-amino-acid polypeptide reads, in one-letter code: Chaperonin GroEL 3 (548 aa).

ATP-binding positions include 30-33 (TLGP), Lys-51, 87-91 (DGTTT), Gly-415, and Asp-496.

The protein belongs to the chaperonin (HSP60) family. In terms of assembly, forms a cylinder of 14 subunits composed of two heptameric rings stacked back-to-back. Interacts with the co-chaperonin GroES.

The protein resides in the cytoplasm. It catalyses the reaction ATP + H2O + a folded polypeptide = ADP + phosphate + an unfolded polypeptide.. In terms of biological role, together with its co-chaperonin GroES, plays an essential role in assisting protein folding. The GroEL-GroES system forms a nano-cage that allows encapsulation of the non-native substrate proteins and provides a physical environment optimized to promote and accelerate protein folding. The chain is Chaperonin GroEL 3 from Nitrobacter winogradskyi (strain ATCC 25391 / DSM 10237 / CIP 104748 / NCIMB 11846 / Nb-255).